Consider the following 404-residue polypeptide: Cytoplasmic 60S subunit biogenesis factor REI1 homolog 1 (404 aa).

C2H2-type zinc fingers lie at residues 4-28 and 68-92; these read LTCNACNMEFKDEEERNLHYKSDWH and YTCAICAKGYRSSKAHEQHLQSRSH. The interval 119 to 169 is disordered; it reads QHRGSIDDDSEDEWVEVDSDEELAAEEASDSLSKLNVNESGSAEDMDDDGD. 2 stretches are compositionally biased toward acidic residues: residues 125–147 and 160–169; these read DDDSEDEWVEVDSDEELAAEEAS and SAEDMDDDGD. 2 consecutive C2H2-type zinc fingers follow at residues 178–201 and 229–256; these read TCCLMCDKKHKTLESCMLHMHKHH and FMCLYCNELCRPFSSLEAVRKHMEAKSH.

Belongs to the REI1 family. As to quaternary structure, can form homodimer. Interacts with RLP24, RPL24A, RPL24B, EBP1 and JJJ1.

It localises to the cytoplasm. Its function is as follows. Pre-60S-associated factor involved in the cytoplasmic maturation of the 60S subunit. Involved in the dissociation and recycling of other late pre-60S factors before newly synthesized large ribosomal subunits enter translation. Can complement the growth defect of a yeast mutant lacking REI1. Required for leaf growth under cold temperature conditions. This chain is Cytoplasmic 60S subunit biogenesis factor REI1 homolog 1, found in Arabidopsis thaliana (Mouse-ear cress).